A 184-amino-acid polypeptide reads, in one-letter code: Myeloproliferative leukemia protein (184 aa).

The WSXWS motif signature appears at 26–30 (WSAWS). A helical membrane pass occupies residues 44 to 64 (ITLVTALLLVLSLSALLGLLL). The Box 1 motif motif lies at 80–88 (LWPSLPDLH).

Belongs to the type I cytokine receptor family. Type 1 subfamily.

The protein resides in the membrane. Truncated form of the receptor for thrombopoietin. This chain is Myeloproliferative leukemia protein (V-MPL), found in Mus musculus (Mouse).